Reading from the N-terminus, the 247-residue chain is 5-oxoprolinase subunit A (247 aa).

This sequence belongs to the LamB/PxpA family. Forms a complex composed of PxpA, PxpB and PxpC.

It carries out the reaction 5-oxo-L-proline + ATP + 2 H2O = L-glutamate + ADP + phosphate + H(+). Catalyzes the cleavage of 5-oxoproline to form L-glutamate coupled to the hydrolysis of ATP to ADP and inorganic phosphate. In Histophilus somni (strain 129Pt) (Haemophilus somnus), this protein is 5-oxoprolinase subunit A.